The primary structure comprises 349 residues: Protein MULTIPLE CHLOROPLAST DIVISION SITE 1 (349 aa).

The transit peptide at 1–52 directs the protein to the chloroplast; it reads MASIDSLQFHSLCNLQSSIGRAKLQNPSSLVIFRRRPVNLNWVQFETKGSFV. Residues 53 to 116 lie on the Chloroplast intermembrane side of the membrane; the sequence is CKAIGDSSTP…VVFLMKKCSV (64 aa). The helical transmembrane segment at 117 to 139 threads the bilayer; the sequence is NSIWIGVCITATVLVAAIRAYVV. At 140-349 the chain is on the stromal side; the sequence is RKSRDNQRAG…NSSSEETHKS (210 aa). The disordered stretch occupies residues 315–349; it reads QRPYKFSAKLEGENIQKNSQENHTGNSSSEETHKS. Polar residues predominate over residues 329–343; sequence IQKNSQENHTGNSSS.

As to quaternary structure, interacts with MIND1. Interacts with ARC6 in the chloroplast stroma and binds to FtsZ2-1 in an ARC6-dependent manner.

The protein resides in the plastid. The protein localises to the chloroplast inner membrane. In terms of biological role, required for chloroplast division. Together with MIND1 and ARC3, regulates FtsZ ring positioning in chloroplasts in an ARC6-dependent manner. Determines the site of chloroplast division in concert with MIND1. Not directly involved in ring formation, but required for MIND1 and MINE1 localization to regulate FtsZ ring formation during plastidial constriction. The polypeptide is Protein MULTIPLE CHLOROPLAST DIVISION SITE 1 (Arabidopsis thaliana (Mouse-ear cress)).